Consider the following 529-residue polypeptide: Peptide chain release factor 3 (529 aa).

Residues 11-280 enclose the tr-type G domain; it reads AKRRTFAIIS…GLVKWAPAPM (270 aa). Residues 20-27, 88-92, and 142-145 each bind GTP; these read SHPDAGKT, DTPGH, and NKLD.

This sequence belongs to the TRAFAC class translation factor GTPase superfamily. Classic translation factor GTPase family. PrfC subfamily.

It localises to the cytoplasm. Increases the formation of ribosomal termination complexes and stimulates activities of RF-1 and RF-2. It binds guanine nucleotides and has strong preference for UGA stop codons. It may interact directly with the ribosome. The stimulation of RF-1 and RF-2 is significantly reduced by GTP and GDP, but not by GMP. This chain is Peptide chain release factor 3, found in Photorhabdus laumondii subsp. laumondii (strain DSM 15139 / CIP 105565 / TT01) (Photorhabdus luminescens subsp. laumondii).